A 155-amino-acid chain; its full sequence is Small ribosomal subunit protein uS9 (155 aa).

Belongs to the universal ribosomal protein uS9 family.

This is Small ribosomal subunit protein uS9 from Sinorhizobium medicae (strain WSM419) (Ensifer medicae).